Here is a 132-residue protein sequence, read N- to C-terminus: Ribosome-binding factor A (132 aa).

The protein belongs to the RbfA family. In terms of assembly, monomer. Binds 30S ribosomal subunits, but not 50S ribosomal subunits or 70S ribosomes.

It is found in the cytoplasm. Functionally, one of several proteins that assist in the late maturation steps of the functional core of the 30S ribosomal subunit. Associates with free 30S ribosomal subunits (but not with 30S subunits that are part of 70S ribosomes or polysomes). Required for efficient processing of 16S rRNA. May interact with the 5'-terminal helix region of 16S rRNA. The polypeptide is Ribosome-binding factor A (Burkholderia multivorans (strain ATCC 17616 / 249)).